The sequence spans 250 residues: Probable ABC transporter permease protein BAB2_1148 (250 aa).

A run of 6 helical transmembrane segments spans residues 12–32 (LLSF…GAVV), 63–83 (VLSG…LMGW), 94–114 (WVQF…IVTL), 122–142 (IFVI…QGVI), 172–192 (VPFI…TVVA), and 211–231 (LYYD…LGLF). An ABC transmembrane type-1 domain is found at 56-236 (IFASLRRVLS…ILGLFMDRLL (181 aa)).

Belongs to the binding-protein-dependent transport system permease family. The complex is composed of two ATP-binding proteins (BAB2_1147), two transmembrane proteins (BAB2_1148) and a solute-binding protein (BAB2_1146).

It is found in the cell inner membrane. Its function is as follows. Probably part of an ABC transporter complex. Probably responsible for the translocation of the substrate across the membrane. In Brucella abortus (strain 2308), this protein is Probable ABC transporter permease protein BAB2_1148.